The primary structure comprises 132 residues: S-adenosylmethionine decarboxylase proenzyme (132 aa).

Ser65 functions as the Schiff-base intermediate with substrate; via pyruvic acid in the catalytic mechanism. Ser65 is subject to Pyruvic acid (Ser); by autocatalysis. His70 (proton acceptor; for processing activity) is an active-site residue. Cys85 acts as the Proton donor; for catalytic activity in catalysis.

It belongs to the prokaryotic AdoMetDC family. Type 1 subfamily. In terms of assembly, heterotetramer of two alpha and two beta chains arranged as a dimer of alpha/beta heterodimers. Requires pyruvate as cofactor. Post-translationally, is synthesized initially as an inactive proenzyme. Formation of the active enzyme involves a self-maturation process in which the active site pyruvoyl group is generated from an internal serine residue via an autocatalytic post-translational modification. Two non-identical subunits are generated from the proenzyme in this reaction, and the pyruvate is formed at the N-terminus of the alpha chain, which is derived from the carboxyl end of the proenzyme. The post-translation cleavage follows an unusual pathway, termed non-hydrolytic serinolysis, in which the side chain hydroxyl group of the serine supplies its oxygen atom to form the C-terminus of the beta chain, while the remainder of the serine residue undergoes an oxidative deamination to produce ammonia and the pyruvoyl group blocking the N-terminus of the alpha chain.

The catalysed reaction is S-adenosyl-L-methionine + H(+) = S-adenosyl 3-(methylsulfanyl)propylamine + CO2. It functions in the pathway amine and polyamine biosynthesis; S-adenosylmethioninamine biosynthesis; S-adenosylmethioninamine from S-adenosyl-L-methionine: step 1/1. Catalyzes the decarboxylation of S-adenosylmethionine to S-adenosylmethioninamine (dcAdoMet), the propylamine donor required for the synthesis of the polyamines spermine and spermidine from the diamine putrescine. In Symbiobacterium thermophilum (strain DSM 24528 / JCM 14929 / IAM 14863 / T), this protein is S-adenosylmethionine decarboxylase proenzyme.